Here is a 115-residue protein sequence, read N- to C-terminus: Nitrogen regulatory protein P-II 2 (115 aa).

Tyr-54 bears the O-UMP-tyrosine mark.

Belongs to the P(II) protein family.

Could be involved in the regulation of nitrogen fixation. The protein is Nitrogen regulatory protein P-II 2 of Methanothermobacter thermautotrophicus (strain ATCC 29096 / DSM 1053 / JCM 10044 / NBRC 100330 / Delta H) (Methanobacterium thermoautotrophicum).